The primary structure comprises 165 residues: Large ribosomal subunit protein uL10 (165 aa).

Belongs to the universal ribosomal protein uL10 family. Part of the ribosomal stalk of the 50S ribosomal subunit. The N-terminus interacts with L11 and the large rRNA to form the base of the stalk. The C-terminus forms an elongated spine to which L12 dimers bind in a sequential fashion forming a multimeric L10(L12)X complex.

Its function is as follows. Forms part of the ribosomal stalk, playing a central role in the interaction of the ribosome with GTP-bound translation factors. The chain is Large ribosomal subunit protein uL10 from Buchnera aphidicola subsp. Acyrthosiphon pisum (strain 5A).